We begin with the raw amino-acid sequence, 854 residues long: V-type proton ATPase 116 kDa subunit a 2 (854 aa).

The Cytoplasmic portion of the chain corresponds to 1–393 (MGSLFRSETM…DAYGVGSYQE (393 aa)). The chain crosses the membrane as a helical span at residues 394 to 412 (VNPALFTIITFPFLFAVMF). The Vacuolar segment spans residues 413 to 414 (GD). The chain crosses the membrane as a helical span at residues 415 to 431 (FGHGFVMFLFALLLVLN). Residues 432–445 (ENHPRLNQSQEIMR) are Cytoplasmic-facing. A helical transmembrane segment spans residues 446–475 (MFFNGRYILLLMGLFSVYTGLIYNDCFSKS). At 476–549 (VNLFGSRWNV…ATNRLTFLNS (74 aa)) the chain is on the vacuolar side. The helical transmembrane segment at 550-569 (FKMKMSVILGITHMTFGVIL) threads the bilayer. The Cytoplasmic segment spans residues 570–587 (GIFNHLHFRKKFNICLVS). The helical transmembrane segment at 588–608 (IPELLFMLCIFGYLIFMIIYK) threads the bilayer. The Vacuolar segment spans residues 609–651 (WLVYSAETSRTAPSILIEFISMFLFLASDTGGLYPGQEHVQRL). A helical transmembrane segment spans residues 652–671 (LLLITVLSVPVLFLGKPLFL). Residues 672–739 (LWLHRGRSCF…EILMTQIIHS (68 aa)) are Cytoplasmic-facing. Phosphoserine occurs at positions 695 and 700. Residues 740-764 (IEYCLGCISNTASYLRLWALSLAHA) traverse the membrane as a helical segment. The Vacuolar segment spans residues 765–785 (QLSEVLWAMLMHVGLRVDTAY). Residues 786–824 (GVLVLLPVIAFFAVLTIFILLIMEGLSAFLHAIRLHWVE) form a helical membrane-spanning segment. Residues 825-854 (FQNKFYVGAGTKFVPFSFRLLSSKFSDDLA) lie on the Cytoplasmic side of the membrane.

It belongs to the V-ATPase 116 kDa subunit family. V-ATPase is a heteromultimeric enzyme made up of two complexes: the ATP-hydrolytic V1 complex and the proton translocation V0 complex. The V1 complex consists of three catalytic AB heterodimers that form a heterohexamer, three peripheral stalks each consisting of EG heterodimers, one central rotor including subunits D and F, and the regulatory subunits C and H. The proton translocation complex V0 consists of the proton transport subunit a, a ring of proteolipid subunits c9c'', rotary subunit d, subunits e and f, and the accessory subunits ATP6AP1/Ac45 and ATP6AP2/PRR. Directly interacts with PSCD2 through its N-terminal cytosolic tail in an intra-endosomal acidification-dependent manner. Disruption of this interaction results in the inhibition of endocytosis. Interacts with SPAAR. In terms of tissue distribution, highly expressed in lung, kidney and spleen.

The protein resides in the cell membrane. It is found in the endosome membrane. Functionally, subunit of the V0 complex of vacuolar(H+)-ATPase (V-ATPase), a multisubunit enzyme composed of a peripheral complex (V1) that hydrolyzes ATP and a membrane integral complex (V0) that translocates protons. V-ATPase is responsible for acidifying and maintaining the pH of intracellular compartments and in some cell types, is targeted to the plasma membrane, where it is responsible for acidifying the extracellular environment. Essential component of the endosomal pH-sensing machinery. May play a role in maintaining the Golgi functions, such as glycosylation maturation, by controlling the Golgi pH. In aerobic conditions, involved in intracellular iron homeostasis, thus triggering the activity of Fe(2+) prolyl hydroxylase (PHD) enzymes, and leading to HIF1A hydroxylation and subsequent proteasomal degradation. The protein is V-type proton ATPase 116 kDa subunit a 2 (ATP6V0A2) of Bos taurus (Bovine).